The chain runs to 616 residues: Protein translocase subunit SecD (616 aa).

6 helical membrane-spanning segments follow: residues 11-31 (LMVIFIVAIGILYSLPNIYGE), 453-473 (QGINASLWGLVAVIAFMLFYY), 475-495 (MFGVIASFALVINIVLLVGLM), 497-517 (ILPGATLSMPGIAGIVLTLGM), 547-569 (YNGAFTSIFDANLTTILTAIILY), and 585-605 (LGVAISMFTAITGTRALVNAL).

The protein belongs to the SecD/SecF family. SecD subfamily. In terms of assembly, forms a complex with SecF. Part of the essential Sec protein translocation apparatus which comprises SecA, SecYEG and auxiliary proteins SecDF-YajC and YidC.

It localises to the cell inner membrane. Functionally, part of the Sec protein translocase complex. Interacts with the SecYEG preprotein conducting channel. SecDF uses the proton motive force (PMF) to complete protein translocation after the ATP-dependent function of SecA. This chain is Protein translocase subunit SecD, found in Haemophilus influenzae (strain ATCC 51907 / DSM 11121 / KW20 / Rd).